Here is a 793-residue protein sequence, read N- to C-terminus: Probable phosphoketolase (793 aa).

This sequence belongs to the XFP family. Requires thiamine diphosphate as cofactor.

This Rhodopirellula baltica (strain DSM 10527 / NCIMB 13988 / SH1) protein is Probable phosphoketolase.